A 679-amino-acid chain; its full sequence is Cysteine-rich receptor-like protein kinase 29 (679 aa).

Residues 1–23 (MEHVRVIFFFACFLTLAPFHAFA) form the signal peptide. The Extracellular segment spans residues 24–286 (QVDSYEFDPD…RTGKGKGGSK (263 aa)). 2 consecutive Gnk2-homologous domains span residues 30 to 134 (FDPD…NRTI) and 140 to 249 (TNPT…TWRF). Asn-41, Asn-45, Asn-71, Asn-107, Asn-131, and Asn-187 each carry an N-linked (GlcNAc...) asparagine glycan. The disordered stretch occupies residues 260 to 281 (PPAIQPADSPQSAARTERTGKG). A helical transmembrane segment spans residues 287–307 (VIIAIVIPILLVALLAICLCL). Over 308-679 (VLKWRKNKSG…DVTVSEFSPR (372 aa)) the chain is Cytoplasmic. One can recognise a Protein kinase domain in the interval 357–637 (FSSENELGRG…SLMLNSYSFT (281 aa)). ATP contacts are provided by residues 363 to 371 (LGRGGFGSV) and Lys-385. Tyr-430 is subject to Phosphotyrosine. Residue Asp-482 is the Proton acceptor of the active site. Phosphoserine is present on Ser-486. Thr-524 bears the Phosphothreonine mark. Tyr-532 is subject to Phosphotyrosine. The interval 659 to 679 (SSTEGLQMSSNDVTVSEFSPR) is disordered.

The protein belongs to the protein kinase superfamily. Ser/Thr protein kinase family. CRK subfamily.

It is found in the membrane. The enzyme catalyses L-seryl-[protein] + ATP = O-phospho-L-seryl-[protein] + ADP + H(+). The catalysed reaction is L-threonyl-[protein] + ATP = O-phospho-L-threonyl-[protein] + ADP + H(+). This is Cysteine-rich receptor-like protein kinase 29 (CRK29) from Arabidopsis thaliana (Mouse-ear cress).